Here is a 154-residue protein sequence, read N- to C-terminus: Telokin (154 aa).

The interval 1 to 24 (ISGMSGRKASGSSPTSPINANKVE) is disordered. Over residues 10 to 19 (SGSSPTSPIN) the composition is skewed to polar residues. In terms of domain architecture, Ig-like C2-type spans 42-133 (PYFTKTILDM…ATCTAELLVE (92 aa)). The interval 134-154 (TMGKEGEGEGEGEEDEEEEEE) is disordered. Residues 141-154 (GEGEGEEDEEEEEE) show a composition bias toward acidic residues.

Belongs to the protein kinase superfamily. CAMK Ser/Thr protein kinase family. In terms of assembly, binds calmodulin.

Its function is as follows. Corresponds to the C-terminus of smooth muscle myosin light chain kinase. The protein is Telokin of Meleagris gallopavo (Wild turkey).